Here is a 479-residue protein sequence, read N- to C-terminus: Bifunctional protein HldE (479 aa).

The ribokinase stretch occupies residues 1–322 (MIDDFRFGRI…RELLQEMPET (322 aa)). An ATP-binding site is contributed by 198–201 (NRIE). The active site involves aspartate 267. The tract at residues 347–479 (FTNGCFDLVH…LVRGMQSAPS (133 aa)) is cytidylyltransferase.

It in the N-terminal section; belongs to the carbohydrate kinase PfkB family. In the C-terminal section; belongs to the cytidylyltransferase family. In terms of assembly, homodimer.

The enzyme catalyses D-glycero-beta-D-manno-heptose 7-phosphate + ATP = D-glycero-beta-D-manno-heptose 1,7-bisphosphate + ADP + H(+). It carries out the reaction D-glycero-beta-D-manno-heptose 1-phosphate + ATP + H(+) = ADP-D-glycero-beta-D-manno-heptose + diphosphate. It participates in nucleotide-sugar biosynthesis; ADP-L-glycero-beta-D-manno-heptose biosynthesis; ADP-L-glycero-beta-D-manno-heptose from D-glycero-beta-D-manno-heptose 7-phosphate: step 1/4. It functions in the pathway nucleotide-sugar biosynthesis; ADP-L-glycero-beta-D-manno-heptose biosynthesis; ADP-L-glycero-beta-D-manno-heptose from D-glycero-beta-D-manno-heptose 7-phosphate: step 3/4. Its function is as follows. Catalyzes the phosphorylation of D-glycero-D-manno-heptose 7-phosphate at the C-1 position to selectively form D-glycero-beta-D-manno-heptose-1,7-bisphosphate. In terms of biological role, catalyzes the ADP transfer from ATP to D-glycero-beta-D-manno-heptose 1-phosphate, yielding ADP-D-glycero-beta-D-manno-heptose. The chain is Bifunctional protein HldE from Gluconobacter oxydans (strain 621H) (Gluconobacter suboxydans).